The primary structure comprises 152 residues: NADH-ubiquinone oxidoreductase chain 4 (152 aa).

4 consecutive transmembrane segments (helical) span residues 2–22 (FSGATTLMIAHGLTSSMYFCL), 43–63 (ILLPLTAFWWLTASLTNLALP), 84–104 (ITIVLTGLNMLITALYSLHMF), and 128–148 (MLMFMHLAPIILLSLNPNIIL).

This sequence belongs to the complex I subunit 4 family.

The protein resides in the mitochondrion membrane. It catalyses the reaction a ubiquinone + NADH + 5 H(+)(in) = a ubiquinol + NAD(+) + 4 H(+)(out). Its function is as follows. Core subunit of the mitochondrial membrane respiratory chain NADH dehydrogenase (Complex I) that is believed to belong to the minimal assembly required for catalysis. Complex I functions in the transfer of electrons from NADH to the respiratory chain. The immediate electron acceptor for the enzyme is believed to be ubiquinone. This Macaca fascicularis (Crab-eating macaque) protein is NADH-ubiquinone oxidoreductase chain 4 (MT-ND4).